Reading from the N-terminus, the 478-residue chain is Kynureninase (478 aa).

Pyridoxal 5'-phosphate-binding positions include leucine 138, threonine 139, 166-169 (FPSD), aspartate 252, histidine 255, and tyrosine 277. At lysine 278 the chain carries N6-(pyridoxal phosphate)lysine. Pyridoxal 5'-phosphate contacts are provided by tryptophan 315 and asparagine 343.

This sequence belongs to the kynureninase family. As to quaternary structure, homodimer. It depends on pyridoxal 5'-phosphate as a cofactor.

Its subcellular location is the cytoplasm. The enzyme catalyses L-kynurenine + H2O = anthranilate + L-alanine + H(+). It catalyses the reaction 3-hydroxy-L-kynurenine + H2O = 3-hydroxyanthranilate + L-alanine + H(+). It participates in amino-acid degradation; L-kynurenine degradation; L-alanine and anthranilate from L-kynurenine: step 1/1. Its pathway is cofactor biosynthesis; NAD(+) biosynthesis; quinolinate from L-kynurenine: step 2/3. Catalyzes the cleavage of L-kynurenine (L-Kyn) and L-3-hydroxykynurenine (L-3OHKyn) into anthranilic acid (AA) and 3-hydroxyanthranilic acid (3-OHAA), respectively. The chain is Kynureninase from Coccidioides immitis (strain RS) (Valley fever fungus).